The following is a 790-amino-acid chain: Vacuolar protein sorting-associated protein 35C (790 aa).

Met-1 bears the N-acetylmethionine mark.

The protein belongs to the VPS35 family. Component of the retromer complex which consists of VPS29 (MAG1), VPS26 (VPS26A or VPS26B), VPS35 (VPS35A or VPS35B or VPS35C), VPS5/17 (SNX1 or SNX2A or SNX2B). Component of a retromer subcomplex consisting of VPS29 (MAG1), VPS26 (VPS26A or VPS26B), VPS35 (VPS35A or VPS35B or VPS35C).

It is found in the cytoplasm. It localises to the endosome membrane. The protein resides in the prevacuolar compartment membrane. The protein localises to the golgi apparatus. Its subcellular location is the trans-Golgi network membrane. Its function is as follows. Plays a role in vesicular protein sorting. Component of the membrane-associated retromer complex which is essential in endosome-to-Golgi retrograde transport. Also involved in the efficient sorting of seed storage proteins. The VPS29-VPS26-VPS35 subcomplex may be involved in recycling of specific cargos from endosome to the plasma membrane. This chain is Vacuolar protein sorting-associated protein 35C (VPS35C), found in Arabidopsis thaliana (Mouse-ear cress).